A 158-amino-acid polypeptide reads, in one-letter code: Large ribosomal subunit protein uL11 (158 aa).

The protein belongs to the universal ribosomal protein uL11 family. As to quaternary structure, part of the ribosomal stalk of the 50S ribosomal subunit. Interacts with L10 and the large rRNA to form the base of the stalk. L10 forms an elongated spine to which L12 dimers bind in a sequential fashion forming a multimeric L10(L12)X complex.

Functionally, forms part of the ribosomal stalk which helps the ribosome interact with GTP-bound translation factors. The sequence is that of Large ribosomal subunit protein uL11 from Methanocella arvoryzae (strain DSM 22066 / NBRC 105507 / MRE50).